Here is a 94-residue protein sequence, read N- to C-terminus: Small ubiquitin-related modifier 3 (94 aa).

Lys11 participates in a covalent cross-link: Glycyl lysine isopeptide (Lys-Gly) (interchain with G-Cter in SUMO). The region spanning 15-92 (DHINLKVAGQ…IDVFQQQTGG (78 aa)) is the Ubiquitin-like domain. Residue Gly92 forms a Glycyl lysine isopeptide (Gly-Lys) (interchain with K-? in acceptor proteins) linkage. The propeptide occupies 93-94 (VC).

It belongs to the ubiquitin family. SUMO subfamily. In terms of assembly, interacts with sae2 and ube2i. Covalently attached to a number of proteins. Polymeric chains can be formed through Lys-11 cross-linking. In terms of processing, cleavage of precursor form by a sentrin-specific protease is necessary for function.

Its subcellular location is the cytoplasm. The protein resides in the nucleus. The protein localises to the PML body. Its function is as follows. Ubiquitin-like protein which can be covalently attached to target lysines either as a monomer or as a lysine-linked polymer. Does not seem to be involved in protein degradation and may function as an antagonist of ubiquitin in the degradation process. Plays a role in a number of cellular processes such as nuclear transport, DNA replication and repair, mitosis and signal transduction. Covalent attachment to its substrates requires prior activation by the E1 complex sae1-sae2 and linkage to the E2 enzyme ube2i. This is Small ubiquitin-related modifier 3 (sumo3) from Xenopus laevis (African clawed frog).